The following is a 174-amino-acid chain: RNA pyrophosphohydrolase (174 aa).

Residues 6–149 form the Nudix hydrolase domain; it reads GYRPNVGIIL…KRDVYLGALK (144 aa). Residues 38–59 carry the Nudix box motif; sequence GGIKPGESPETAMYRELYEEVG.

This sequence belongs to the Nudix hydrolase family. RppH subfamily. Requires a divalent metal cation as cofactor.

In terms of biological role, accelerates the degradation of transcripts by removing pyrophosphate from the 5'-end of triphosphorylated RNA, leading to a more labile monophosphorylated state that can stimulate subsequent ribonuclease cleavage. The sequence is that of RNA pyrophosphohydrolase from Neisseria meningitidis serogroup C (strain 053442).